The sequence spans 380 residues: Hydrogenase maturation factor HypD2 (380 aa).

Positions 36, 64, and 67 each coordinate Fe cation.

This sequence belongs to the HypD family. Requires [4Fe-4S] cluster as cofactor.

Its pathway is protein modification; [NiFe] hydrogenase maturation. Involved in the maturation of [NiFe] hydrogenases. Involved in the biosynthesis of the Fe(CN)(2)CO cofactor. This Bradyrhizobium diazoefficiens (strain JCM 10833 / BCRC 13528 / IAM 13628 / NBRC 14792 / USDA 110) protein is Hydrogenase maturation factor HypD2 (hypD2).